Reading from the N-terminus, the 100-residue chain is uncharacterized protein (100 aa).

Positions 1–100 constitute an HTH arsR-type domain; it reads MEPIEVFKAL…KLADFLKTEI (100 aa). Positions 44–67 form a DNA-binding region, H-T-H motif; that stretch reads VSQITDKLKMTQSTASQYLTILLR.

This is an uncharacterized protein from Bacillus subtilis (strain 168).